The sequence spans 488 residues: Microtubule-destabilizing protein 60 (488 aa).

Residues 25-56 (AQEVSRFSENSNPNFVSHSTPLEKSSKSSAQK) show a composition bias toward polar residues. Disordered stretches follow at residues 25–71 (AQEV…VFSP), 262–304 (HASV…TKKQ), and 436–457 (DRPFIPKRSNKHPTVPRDPKFN). Positions 264 to 280 (SVSSSWDNSVSSLNSNG) are enriched in low complexity.

It belongs to the TPX2 family.

The protein localises to the cytoplasm. Its subcellular location is the cytoskeleton. Functionally, binds directly to microtubules. Microtubule-destabilizing protein involved in the PIF3-dependent positive regulation of hypocotyl cell elongation via the modulation of cortical microtubules dynamic in response to light and ethylene signaling. Promotes submergence-induced and ethylene-dependent underwater hypocotyl elongation. The protein is Microtubule-destabilizing protein 60 of Arabidopsis thaliana (Mouse-ear cress).